Consider the following 264-residue polypeptide: Astacin-like metalloprotease toxin 1 (264 aa).

The first 16 residues, 1-16, serve as a signal peptide directing secretion; that stretch reads MIKYIGVFAFLVGGFC. A propeptide spanning residues 17-51 is cleaved from the precursor; it reads HDFETVISNQDPIVDGMRLVEGDMLFDDGPLFTER. In terms of domain architecture, Peptidase M12A spans 52 to 249; the sequence is NAVKYDQQLW…VKVNKLYKCP (198 aa). 2 cysteine pairs are disulfide-bonded: C93/C248 and C114/C135. Position 143 (H143) interacts with Zn(2+). Residue E144 is part of the active site. Residues H147 and H153 each contribute to the Zn(2+) site. 2 N-linked (GlcNAc...) asparagine glycosylation sites follow: N173 and N185.

Monomer. Zn(2+) is required as a cofactor. In terms of tissue distribution, expressed by the venom gland.

The protein localises to the secreted. Its activity is regulated as follows. Inhibited by 1,10-phenanthroline. Its function is as follows. Zinc metalloprotease. Provoques deadhesion of endothelial cells from cell cultures, and also degradation of fibronectin, fibrinogen and gelatin in vitro. Its role in the venom is not fully understood but it might act as a spreading factor that facilitates diffusion of other venom toxins. Alternatively, it might be involved in the proteolytic processing of other venom toxins or it might play a role in extra-oral digestion of prey. In Loxosceles intermedia (Brown spider), this protein is Astacin-like metalloprotease toxin 1.